The sequence spans 562 residues: Formate--tetrahydrofolate ligase (562 aa).

71 to 78 (TPAGEGKS) serves as a coordination point for ATP.

Belongs to the formate--tetrahydrofolate ligase family.

It catalyses the reaction (6S)-5,6,7,8-tetrahydrofolate + formate + ATP = (6R)-10-formyltetrahydrofolate + ADP + phosphate. The protein operates within one-carbon metabolism; tetrahydrofolate interconversion. The protein is Formate--tetrahydrofolate ligase of Bacillus anthracis (strain A0248).